A 227-amino-acid polypeptide reads, in one-letter code: uncharacterized protein (227 aa).

The next 2 helical transmembrane spans lie at 12 to 32 (IVLF…YLYA) and 80 to 100 (IILI…KIPL).

The protein localises to the cell membrane. This is an uncharacterized protein from Methanocaldococcus jannaschii (strain ATCC 43067 / DSM 2661 / JAL-1 / JCM 10045 / NBRC 100440) (Methanococcus jannaschii).